Consider the following 133-residue polypeptide: UPF0047 protein Rv2556c (133 aa).

This sequence belongs to the UPF0047 family.

The chain is UPF0047 protein Rv2556c from Mycobacterium tuberculosis (strain ATCC 25618 / H37Rv).